Here is a 578-residue protein sequence, read N- to C-terminus: Probable ATP-dependent RNA helicase DDX55 homolog (578 aa).

The short motif at 7-37 is the Q motif element; sequence PVALKTFREKLGPELLEVFDKSYKSFTDVQV. Positions 40 to 218 constitute a Helicase ATP-binding domain; sequence GTHLLNLSDV…VFGLRNAKQV (179 aa). Residue 53 to 60 participates in ATP binding; it reads SPTGSGKT. The DEAD box signature appears at 166 to 169; that stretch reads DEAD. Residues 231–393 form the Helicase C-terminal domain; it reads TLKNYYVECR…EIKVPTNNSR (163 aa). Residues 507-557 are disordered; it reads AAKDKKRREKEARKLKKMGGRFRNGGGTGRKAEEKKALKRKAEEEDDAQND. A compositionally biased stretch (basic residues) spans 510 to 526; it reads DKKRREKEARKLKKMGG. A compositionally biased stretch (basic and acidic residues) spans 536–549; sequence RKAEEKKALKRKAE.

It belongs to the DEAD box helicase family. DDX55/SPB4 subfamily.

It catalyses the reaction ATP + H2O = ADP + phosphate + H(+). Its function is as follows. Probable ATP-binding RNA helicase. The protein is Probable ATP-dependent RNA helicase DDX55 homolog of Caenorhabditis elegans.